The primary structure comprises 4367 residues: Guanylate cyclase (4367 aa).

Residues 1 to 10 show a composition bias toward polar residues; that stretch reads MKKTRTTAAE. Positions 1–70 are disordered; it reads MKKTRTTAAE…MSFLQGKHQQ (70 aa). The Cytoplasmic segment spans residues 1–150; the sequence is MKKTRTTAAE…FKNLWEQFHR (150 aa). Positions 19 to 33 are enriched in basic and acidic residues; that stretch reads PHDEHRGRGREHGGA. A compositionally biased stretch (polar residues) spans 54 to 63; sequence HQATQKQMSF. Residues 151–171 form a helical membrane-spanning segment; it reads VINWWFLVMAIIQAIPQLHYN. Residues 172-174 are Extracellular-facing; that stretch reads PNH. The helical transmembrane segment at 175-195 threads the bilayer; sequence AWSTALPFAIVLVFGMLKDAF. Over 196–373 the chain is Cytoplasmic; that stretch reads TDLGRRERDR…GFKRPHIEKD (178 aa). The helical transmembrane segment at 374-394 threads the bilayer; the sequence is INTYLFISFFIVFLTILISVM. The Extracellular segment spans residues 395 to 452; the sequence is SKWSVQERDSGDTGVTDAGASSGSGSSSGETSQTYGSSVEFMLGSRDLLQNPWMSILR. The tract at residues 402 to 426 is disordered; it reads RDSGDTGVTDAGASSGSGSSSGETS. Positions 407 to 426 are enriched in low complexity; sequence TGVTDAGASSGSGSSSGETS. Residues 453 to 473 traverse the membrane as a helical segment; sequence FLAVYAPVLPLSLPLILDVVY. Residues 474 to 2258 are Cytoplasmic-facing; it reads LLQSVLIEGD…VHGRLSLMRV (1785 aa). Disordered regions lie at residues 486-535, 550-699, 831-918, 932-966, 980-1047, 1079-1164, 1344-1593, 1607-1652, 1773-1861, and 1881-1946; these read IRGG…QQPL, SEKF…ISGR, ETSA…ASSL, RLEE…PQLA, VGIQ…GELS, GMSF…MPAV, PSGT…SLKS, FRRG…TGTG, GGRG…GLRS, and DKQH…PQHL. Polar residues predominate over residues 523–535; that stretch reads AHSSQNASLQQPL. 2 stretches are compositionally biased toward basic and acidic residues: residues 605-628 and 670-679; these read ETLR…REQL and RRSDDRDRKS. A compositionally biased stretch (low complexity) spans 850-863; it reads SAASSRSQSAPASA. Residues 880–892 show a composition bias toward polar residues; that stretch reads QTLTNQQTGQQSP. Residues 906 to 917 show a composition bias toward low complexity; sequence ASPGAADSPASS. Basic and acidic residues predominate over residues 932–948; the sequence is RLEETGSQKEEDSRSDR. Residues 983–996 show a composition bias toward low complexity; that stretch reads QSQHSSQSLLSSRQ. The span at 1025–1047 shows a compositional bias: basic and acidic residues; the sequence is DRMYSRDYHRESRSSSPRDGELS. Composition is skewed to polar residues over residues 1084–1094 and 1117–1130; these read SRPSSQFTFSS and RSLT…TASP. Low complexity predominate over residues 1344–1357; the sequence is PSGTSASSGAPSGP. Gly residues-rich tracts occupy residues 1370–1381 and 1389–1400; these read QGQGHGSLGAPG and CLGGAGGSGARG. Residues 1443–1454 are compositionally biased toward pro residues; the sequence is VPSPRPLSPAGP. Positions 1527–1542 are enriched in basic and acidic residues; the sequence is SFKEKHEEFAFSKDED. Over residues 1543–1567 the composition is skewed to acidic residues; sequence TATVDQDDTQSATDEEHDVEGEEEE. Low complexity predominate over residues 1583–1593; the sequence is SASASLMSLKS. Composition is skewed to polar residues over residues 1628-1652, 1779-1791, and 1843-1852; these read GRSS…TGTG, VSLS…SSAK, and VNPSGQTYSQ. Positions 1881–1922 are enriched in basic and acidic residues; the sequence is DKQHQRGHGPEGDEGSHELEGHDAHTGDSHGGHHRDQAEPRA. A compositionally biased stretch (polar residues) spans 1933–1942; that stretch reads RLPQKTQNRL. Residues 2259–2279 form a helical membrane-spanning segment; that stretch reads STVILWSFFKSLCIGLPTFLF. Over 2280–2289 the chain is Extracellular; the sequence is QPQAFWSAVE. Residues 2290 to 2310 traverse the membrane as a helical segment; it reads VYDPLLLMIVDFFWTTLPGII. The Cytoplasmic segment spans residues 2311–2343; the sequence is HGYSDQDLPTHLLPSVPVLYTPGRRRLYFNGFR. Residues 2344 to 2364 form a helical membrane-spanning segment; that stretch reads FILWTVEGIIYSFLIFYLLQA. Residues 2365 to 2376 lie on the Extracellular side of the membrane; it reads TWMDGNTFHDGQ. A helical transmembrane segment spans residues 2377-2397; sequence VLGFHSYGILLLFGSLLQSNV. At 2398 to 2408 the chain is on the cytoplasmic side; the sequence is RIILETSLWTP. The helical transmembrane segment at 2409 to 2429 threads the bilayer; sequence TFLFTTIVLCTIMFFPTVLLY. Residues 2430–2444 lie on the Extracellular side of the membrane; that stretch reads SVTGWPRRYMELAGR. A helical transmembrane segment spans residues 2445-2465; it reads VVFAWPMLYFLIPLWVSIGIL. Residues 2466–2724 are Cytoplasmic-facing; the sequence is VQLLLQVFTS…LKRLVPWYRV (259 aa). A helical transmembrane segment spans residues 2725–2745; it reads IFMLIALYQLLSFLTEYFIDI. The Extracellular portion of the chain corresponds to 2746 to 2762; sequence HWNPGETEMEPWMCVPT. Residues 2763-2783 traverse the membrane as a helical segment; the sequence is LVVEIGFAAVVVCTFYDFIFL. Residues 2784 to 2785 lie on the Cytoplasmic side of the membrane; the sequence is DH. Residues 2786-2806 form a helical membrane-spanning segment; that stretch reads FSLILNSIVFLMVSSSIVFYT. The Extracellular portion of the chain corresponds to 2807 to 2823; it reads ASHVDGTLTSVLFPVFT. A helical membrane pass occupies residues 2824-2844; it reads FVILRISFLQAVVWNILFLIV. The Cytoplasmic segment spans residues 2845 to 2858; that stretch reads TVARFMLDKKYLPP. The chain crosses the membrane as a helical span at residues 2859 to 2879; it reads LNFVHYIPLFIGIDVFVAFVG. Topologically, residues 2880-2903 are extracellular; that stretch reads YRLEYNQRKSFLLDYSVDASRRKQ. Residues 2904-2924 form a helical membrane-spanning segment; that stretch reads REILNTMLPSFVVDQMINSEL. Residues 2925–3693 lie on the Cytoplasmic side of the membrane; the sequence is NEEGIPTSLK…RTHFYNNKSN (769 aa). Positions 2942–3150 constitute a Guanylate cyclase 1 domain; the sequence is SVIFCDVYEF…DTVNTASRMK (209 aa). Disordered regions lie at residues 3214-3245, 3359-3402, 3456-3475, 3485-3508, 3523-3596, and 3620-3653; these read DVIS…ASSG, GQTE…SRFD, SGDE…EVPL, QARE…HTPT, GCAA…ETEK, and FRRR…VDDE. Residues 3383-3402 are compositionally biased toward basic and acidic residues; the sequence is RADRRPAGRREDSRGDSRFD. Basic and acidic residues-rich tracts occupy residues 3485–3499, 3529–3541, and 3549–3569; these read QARE…KRSG, EEEK…RESE, and TESR…DARE. Residues 3626-3637 show a composition bias toward low complexity; sequence AAPSEAASPSSA. Residues 3694-3714 form a helical membrane-spanning segment; it reads INTIEQALIIFLVTFCVQTLT. At 3715–3736 the chain is on the extracellular side; the sequence is RLALPRFYVVCSHHTINLHVCT. The helical transmembrane segment at 3737-3757 threads the bilayer; it reads GLYWAVRATYTLAAFVLWMLF. Topologically, residues 3758–3772 are cytoplasmic; that stretch reads HYRNRKEVATCLELR. Residues 3773–3793 traverse the membrane as a helical segment; that stretch reads WMVFLLNLLFISASCVFALSN. Residues 3794–3895 lie on the Extracellular side of the membrane; it reads SWGVCGQQQE…GSDLVTANGR (102 aa). The chain crosses the membrane as a helical span at residues 3896-3916; the sequence is AYTYWLLSDTIELFFYIVILH. At 3917–3921 the chain is on the cytoplasmic side; sequence HNTGL. A helical membrane pass occupies residues 3922 to 3942; that stretch reads LFQNCILVDVLLMTMSLTFII. At 3943–3950 the chain is on the extracellular side; the sequence is TTARETAS. Residues 3951–3971 traverse the membrane as a helical segment; it reads TVSTIATFPCYVFFNLVSAYC. Residues 3972–4367 lie on the Cytoplasmic side of the membrane; it reads KEYIDRLTFY…GSTPGSALGS (396 aa). The 136-residue stretch at 4024–4159 folds into the Guanylate cyclase 2 domain; sequence TFLFADICGF…MDVLTGNMME (136 aa). Mg(2+)-binding residues include D4029, I4030, and D4073. The segment at 4292-4367 is disordered; sequence ASHGDSGPSD…GSTPGSALGS (76 aa). Positions 4333 to 4344 are enriched in basic and acidic residues; sequence DGLKQLRKEIER. Residues 4356 to 4367 show a composition bias toward polar residues; that stretch reads DIGSTPGSALGS.

This sequence in the N-terminal section; belongs to the cation transport ATPase (P-type) (TC 3.A.3) family. Type IV subfamily. The protein in the C-terminal section; belongs to the adenylyl cyclase class-4/guanylyl cyclase family. As to quaternary structure, interacts with chaperone CDC50.1; the interaction regulates guanylate cyclase GC trafficking and sensing environmental changes. Interacts with UGO; the interaction regulates guanylate cyclase GC trafficking and catalytic activity. Mg(2+) is required as a cofactor. It depends on Mn(2+) as a cofactor.

The protein resides in the cell membrane. It catalyses the reaction GTP = 3',5'-cyclic GMP + diphosphate. Functionally, catalyzes the synthesis of the second messenger cGMP from GTP. During the tachyzoite lytic growth cycle in host cells, detects and transduces environmental changes in potassium, phosphatidic acid and pH levels. By producing cGMP in response to these environmental changes, activates PKG and thereby regulates PKG-dependent microneme secretion which is essential for tachyzoite motility, host cell attachment invasion of and egress from host cells. May play a role in the fission of connected tachyzoites at their basal pole during egress. Does not display flippase activity towards phosphatidylserine, phosphatidic acid or phosphatidylcholine. The protein is Guanylate cyclase of Toxoplasma gondii (strain ATCC 50853 / GT1).